The primary structure comprises 27 residues: Caerulein precursor fragment R2 (27 aa).

In terms of tissue distribution, expressed by the skin glands.

It is found in the secreted. Antimicrobial peptide. The chain is Caerulein precursor fragment R2 from Xenopus ruwenzoriensis (Uganda clawed frog).